The chain runs to 370 residues: Adaptive-response sensory kinase SasA (370 aa).

Positions 152-365 constitute a Histidine kinase domain; the sequence is MVAHELRTPL…CFYLTVPVWQ (214 aa). Histidine 155 is subject to Phosphohistidine; by autocatalysis.

As to quaternary structure, homooligomerizes. Interacts with KaiC. Participates in the KaiBC complex, whose core is composed of a KaiC homohexamer and 6 KaiB.

It carries out the reaction ATP + protein L-histidine = ADP + protein N-phospho-L-histidine.. Member of the two-component regulatory system SasA/RpaA involved in genome-wide circadian gene expression. One of several clock output pathways. Participates in the Kai clock protein complex, the main circadian regulator in cyanobacteria, via its interaction with KaiC. KaiC enhances the autophosphorylation activity of SasA, which then transfers its phosphate group to RpaA to activate it. In addition to its output function, recruits fold-shifted KaiB (KaiB(fs)) to KaiC to cooperatively form the KaiB(6):KaiC(6) complex (independent of SasA kinase activity). Required for robustness of the circadian rhythm of gene expression and is involved in clock output, also required for adaptation to light/dark cycles. The polypeptide is Adaptive-response sensory kinase SasA (Prochlorococcus marinus (strain MIT 9313)).